We begin with the raw amino-acid sequence, 228 residues long: PKHD-type hydroxylase Rmet_0838 (228 aa).

The 102-residue stretch at Arg-78–Ser-179 folds into the Fe2OG dioxygenase domain. Fe cation-binding residues include His-96, Asp-98, and His-160. 2-oxoglutarate is bound at residue Arg-170.

The cofactor is Fe(2+). L-ascorbate is required as a cofactor.

This is PKHD-type hydroxylase Rmet_0838 from Cupriavidus metallidurans (strain ATCC 43123 / DSM 2839 / NBRC 102507 / CH34) (Ralstonia metallidurans).